The following is an 82-amino-acid chain: Small ribosomal subunit protein bTHXm (82 aa).

The transit peptide at 1–22 (MAMRLAAAAAFVRRLVPARNPV) directs the protein to the mitochondrion. Residues 34–56 (RGDKKTKRGKRFKGSYGNARPKR) form a disordered region. Over residues 37–46 (KKTKRGKRFK) the composition is skewed to basic residues.

The protein belongs to the bacterial ribosomal protein bTHX family.

Its subcellular location is the mitochondrion. This Oryza sativa subsp. japonica (Rice) protein is Small ribosomal subunit protein bTHXm.